The following is a 120-amino-acid chain: Large ribosomal subunit protein uL22 (120 aa).

This sequence belongs to the universal ribosomal protein uL22 family. In terms of assembly, part of the 50S ribosomal subunit.

Functionally, this protein binds specifically to 23S rRNA; its binding is stimulated by other ribosomal proteins, e.g. L4, L17, and L20. It is important during the early stages of 50S assembly. It makes multiple contacts with different domains of the 23S rRNA in the assembled 50S subunit and ribosome. The globular domain of the protein is located near the polypeptide exit tunnel on the outside of the subunit, while an extended beta-hairpin is found that lines the wall of the exit tunnel in the center of the 70S ribosome. This chain is Large ribosomal subunit protein uL22, found in Corynebacterium urealyticum (strain ATCC 43042 / DSM 7109).